Reading from the N-terminus, the 236-residue chain is Growth-regulating factor 12 (236 aa).

The segment at M1–T27 is disordered. The QLQ domain occupies A74–K109. The WRC domain occupies E140–A184. 2 consecutive short sequence motifs (bipartite nuclear localization signal) follow at residues R145–R155 and R173–K180.

The protein belongs to the GRF family.

It localises to the nucleus. Its function is as follows. Transcription activator that plays a regulatory role in gibberellin-induced stem elongation. This chain is Growth-regulating factor 12 (GRF12), found in Oryza sativa subsp. japonica (Rice).